We begin with the raw amino-acid sequence, 289 residues long: Ribosomal protein L11 methyltransferase (289 aa).

Threonine 142, glycine 163, aspartate 185, and asparagine 226 together coordinate S-adenosyl-L-methionine.

This sequence belongs to the methyltransferase superfamily. PrmA family.

It localises to the cytoplasm. The enzyme catalyses L-lysyl-[protein] + 3 S-adenosyl-L-methionine = N(6),N(6),N(6)-trimethyl-L-lysyl-[protein] + 3 S-adenosyl-L-homocysteine + 3 H(+). In terms of biological role, methylates ribosomal protein L11. In Legionella pneumophila (strain Paris), this protein is Ribosomal protein L11 methyltransferase.